We begin with the raw amino-acid sequence, 432 residues long: Probable M18 family aminopeptidase 2 (432 aa).

H86, H157, and H408 together coordinate Zn(2+).

This sequence belongs to the peptidase M18 family. The cofactor is Zn(2+).

The chain is Probable M18 family aminopeptidase 2 (apeB) from Streptomyces coelicolor (strain ATCC BAA-471 / A3(2) / M145).